Here is a 172-residue protein sequence, read N- to C-terminus: Ribosome maturation factor RimM (172 aa).

Residues 96–168 (DGEFYYHEII…RVDVEILEGL (73 aa)) enclose the PRC barrel domain.

Belongs to the RimM family. Binds ribosomal protein uS19.

The protein localises to the cytoplasm. An accessory protein needed during the final step in the assembly of 30S ribosomal subunit, possibly for assembly of the head region. Essential for efficient processing of 16S rRNA. May be needed both before and after RbfA during the maturation of 16S rRNA. It has affinity for free ribosomal 30S subunits but not for 70S ribosomes. The chain is Ribosome maturation factor RimM from Streptococcus pneumoniae serotype 4 (strain ATCC BAA-334 / TIGR4).